The following is a 263-amino-acid chain: Endonuclease 8 (263 aa).

The active-site Schiff-base intermediate with DNA is the P2. Residue E3 is the Proton donor of the active site. K53 acts as the Proton donor; for beta-elimination activity in catalysis. Residues Q70, R125, and N169 each contribute to the DNA site. The segment at 229-263 (KVFHRDGELCERCGGIIEKTTLSSRPFYWCPGCQH) adopts an FPG-type zinc-finger fold. R253 acts as the Proton donor; for delta-elimination activity in catalysis.

Belongs to the FPG family. Requires Zn(2+) as cofactor.

The catalysed reaction is 2'-deoxyribonucleotide-(2'-deoxyribose 5'-phosphate)-2'-deoxyribonucleotide-DNA = a 3'-end 2'-deoxyribonucleotide-(2,3-dehydro-2,3-deoxyribose 5'-phosphate)-DNA + a 5'-end 5'-phospho-2'-deoxyribonucleoside-DNA + H(+). Functionally, involved in base excision repair of DNA damaged by oxidation or by mutagenic agents. Acts as a DNA glycosylase that recognizes and removes damaged bases. Has a preference for oxidized pyrimidines, such as thymine glycol, 5,6-dihydrouracil and 5,6-dihydrothymine. Has AP (apurinic/apyrimidinic) lyase activity and introduces nicks in the DNA strand. Cleaves the DNA backbone by beta-delta elimination to generate a single-strand break at the site of the removed base with both 3'- and 5'-phosphates. The protein is Endonuclease 8 of Escherichia coli (strain 55989 / EAEC).